Consider the following 150-residue polypeptide: 3-hydroxyacyl-[acyl-carrier-protein] dehydratase FabZ (150 aa).

Histidine 54 is an active-site residue.

It belongs to the thioester dehydratase family. FabZ subfamily.

It is found in the cytoplasm. The catalysed reaction is a (3R)-hydroxyacyl-[ACP] = a (2E)-enoyl-[ACP] + H2O. Involved in unsaturated fatty acids biosynthesis. Catalyzes the dehydration of short chain beta-hydroxyacyl-ACPs and long chain saturated and unsaturated beta-hydroxyacyl-ACPs. This chain is 3-hydroxyacyl-[acyl-carrier-protein] dehydratase FabZ, found in Colwellia psychrerythraea (strain 34H / ATCC BAA-681) (Vibrio psychroerythus).